Reading from the N-terminus, the 522-residue chain is Maturase K (522 aa).

Belongs to the intron maturase 2 family. MatK subfamily.

The protein localises to the plastid. It is found in the chloroplast. In terms of biological role, usually encoded in the trnK tRNA gene intron. Probably assists in splicing its own and other chloroplast group II introns. This Iris orientalis (Yellowband iris) protein is Maturase K.